Consider the following 345-residue polypeptide: S-adenosylmethionine:tRNA ribosyltransferase-isomerase (345 aa).

This sequence belongs to the QueA family. In terms of assembly, monomer.

It is found in the cytoplasm. It catalyses the reaction 7-aminomethyl-7-carbaguanosine(34) in tRNA + S-adenosyl-L-methionine = epoxyqueuosine(34) in tRNA + adenine + L-methionine + 2 H(+). It functions in the pathway tRNA modification; tRNA-queuosine biosynthesis. Its function is as follows. Transfers and isomerizes the ribose moiety from AdoMet to the 7-aminomethyl group of 7-deazaguanine (preQ1-tRNA) to give epoxyqueuosine (oQ-tRNA). This is S-adenosylmethionine:tRNA ribosyltransferase-isomerase from Acidiphilium cryptum (strain JF-5).